A 315-amino-acid chain; its full sequence is MPGLSCRFYQHKFPEVEDVVMVNVRSIAEMGAYVSLLEYNNIEGMILLSELSRRRIRSINKLIRIGRNECVVVIRVDKEKGYIDLSKRRVSPEEAIKCEDKFTKSKTVYSILRHVAEVLEYTKDEQLESLFQRTAWVFDDKYKRPGYGAYDAFKHAVSDPSILDSLDLNEDEREVLINNINRRLTPQAVKIRADIEVACYGYEGIDAVKEALRAGLNCSTENMPIKINLIAPPRYVMTTTTLERTEGLSVLSQAMAVIKEKIEEKRGVFNVQMEPKVVTDTDETELARQMERLERENAEVDGDDDAEEMEAKAED.

Positions 17 to 88 (EDVVMVNVRS…EKGYIDLSKR (72 aa)) constitute an S1 motif domain. Position 49 is a phosphoserine; by HRI (serine 49). Serine 52 is modified (phosphoserine). Lysine 141 carries the N6-acetyllysine modification. Serine 158 carries the post-translational modification Phosphoserine. Phosphothreonine occurs at positions 279 and 281. The segment at 293 to 315 (LERENAEVDGDDDAEEMEAKAED) is disordered. The segment covering 299-308 (EVDGDDDAEE) has biased composition (acidic residues).

This sequence belongs to the eIF-2-alpha family. As to quaternary structure, eukaryotic translation initiation factor 2 eIF2 is a heterotrimeric complex composed of an alpha (EIF2S1), a beta (EIF2S2) and a gamma (EIF2S3) chain. eIF2 is member of the 43S pre-initiation complex (43S PIC). eIF2 forms a complex with at least CELF1/CUGBP1, CALR, CALR3, EIF2S1, EIF2S2, HSP90B1 and HSPA5. Interaction with METAP2 protects EIF2S1 from inhibitory phosphorylation. Interacts with ABCF1 isoform 2. Associates with ribosomes. Interacts with DDX3X in an RNA-independent manner. Interacts with CDC123. (Microbial infection) Interacts with rotavirus A non-structural protein 2; this interaction probably plays a role in the sequestration of IF2A in viral factories. Interacts with rotavirus A non-structural protein 5; this interaction probably plays a role in its sequestration in viral factories. In terms of processing, phosphorylation at Ser-49 and Ser-52 stabilizes the eIF-2/GDP/eIF2B complex and prevents GDP/GTP exchange reaction, thus impairing the recycling of eIF-2 between successive rounds of initiation and leading to global inhibition of translation, while concomitantly initiating the preferential translation of integrated stress response (ISR)-specific mRNAs. Substrate for at least 4 kinases: EIF2AK1/HRI, EIF2AK2/PKR, EIF2AK3/PERK and EIF2AK4/GCN2. Phosphorylation on Ser-52 by the EIF2AK4/GCN2 protein kinase occurs in response to amino acid starvation and UV irradiation. Phosphorylation at Ser-52 by the EIF2AK3/PERK protein kinase occurs in response to the unfolded protein response. Phosphorylation at Ser-52 by EIF2AK1/HRI in response to mitochondrial damage promotes relocalization to the mitochondrial surface. Post-translationally, (Microbial infection) Phosphorylation by vaccinia virus protein E3 and rotavirus A stabilizes the eIF-2/GDP/eIF2B complex and prevents GDP/GTP exchange reaction, thus impairing the recycling of eIF-2 between successive rounds of initiation and leading to global inhibition of translation.

It is found in the cytoplasm. The protein resides in the stress granule. The protein localises to the cytosol. Its subcellular location is the mitochondrion. With respect to regulation, activity is regulated by phosphorylation at Ser-49 and Ser-52, which stabilizes the eIF2/GDP/eIF2B complex and prevents the eIF2B-mediated exchange of GDP for GTP, thereby preventing the formation of the 43S pre-initiation complex (43S PIC). This results in the global attenuation of 5' cap-dependent protein synthesis and concomitant translation of ISR-specific mRNAs that contain a short upstream open reading frame (uORF) in their 5' UTR, such as ATF4, ATF5, DDIT3/CHOP and PPP1R15A/GADD34. In terms of biological role, member of the eIF2 complex that functions in the early steps of protein synthesis by forming a ternary complex with GTP and initiator tRNA. This complex binds to a 40S ribosomal subunit, followed by mRNA binding to form a 43S pre-initiation complex (43S PIC). Junction of the 60S ribosomal subunit to form the 80S initiation complex is preceded by hydrolysis of the GTP bound to eIF2 and release of an eIF2-GDP binary complex. In order for eIF2 to recycle and catalyze another round of initiation, the GDP bound to eIF2 must exchange with GTP by way of a reaction catalyzed by eIF2B. EIF2S1/eIF2-alpha is a key component of the integrated stress response (ISR), required for adaptation to various stress: phosphorylation by metabolic-stress sensing protein kinases (EIF2AK1/HRI, EIF2AK2/PKR, EIF2AK3/PERK and EIF2AK4/GCN2) in response to stress converts EIF2S1/eIF2-alpha in a global protein synthesis inhibitor, leading to an attenuation of cap-dependent translation, while concomitantly initiating the preferential translation of ISR-specific mRNAs, such as the transcriptional activators ATF4 and QRICH1, and hence allowing ATF4- and QRICH1-mediated reprogramming. EIF2S1/eIF2-alpha also acts as an activator of mitophagy in response to mitochondrial damage: phosphorylation by EIF2AK1/HRI promotes relocalization to the mitochondrial surface, thereby triggering PRKN-independent mitophagy. This is Eukaryotic translation initiation factor 2 subunit 1 from Homo sapiens (Human).